A 185-amino-acid chain; its full sequence is MLNDVFADARDRMSKALDNLETDYKRLRTGRASVSLVDGIRAEYYGTPTALNQLATITIPEPRTIMIQPWDTSVIGEIEKSILKSELGLTPMSDGKVIRINIPVLTADRRRELVKVVKKMSEESKVAVRNIRRDVNEMIKDLKKEKEISEDEQFKAQEETQRITDDFIKKIDVVYSAKEKEILEI.

Belongs to the RRF family.

The protein localises to the cytoplasm. Its function is as follows. Responsible for the release of ribosomes from messenger RNA at the termination of protein biosynthesis. May increase the efficiency of translation by recycling ribosomes from one round of translation to another. The sequence is that of Ribosome-recycling factor from Syntrophobacter fumaroxidans (strain DSM 10017 / MPOB).